A 396-amino-acid chain; its full sequence is Ribosomal RNA large subunit methyltransferase I (396 aa).

The region spanning Thr2–Phe79 is the PUA domain.

This sequence belongs to the methyltransferase superfamily. RlmI family.

It is found in the cytoplasm. The catalysed reaction is cytidine(1962) in 23S rRNA + S-adenosyl-L-methionine = 5-methylcytidine(1962) in 23S rRNA + S-adenosyl-L-homocysteine + H(+). Specifically methylates the cytosine at position 1962 (m5C1962) of 23S rRNA. In Pseudoalteromonas translucida (strain TAC 125), this protein is Ribosomal RNA large subunit methyltransferase I.